The following is a 126-amino-acid chain: Fluoride-specific ion channel FluC (126 aa).

A run of 4 helical transmembrane segments spans residues 4–24 (PLLS…FLGL), 33–53 (IPLG…FAMA), 67–87 (FVIT…IEIV), and 97–117 (MAML…CLGL). Residues Gly74 and Thr77 each coordinate Na(+).

It belongs to the fluoride channel Fluc/FEX (TC 1.A.43) family.

Its subcellular location is the cell inner membrane. The catalysed reaction is fluoride(in) = fluoride(out). Na(+) is not transported, but it plays an essential structural role and its presence is essential for fluoride channel function. Fluoride-specific ion channel. Important for reducing fluoride concentration in the cell, thus reducing its toxicity. The protein is Fluoride-specific ion channel FluC of Acinetobacter baumannii (strain ATCC 17978 / DSM 105126 / CIP 53.77 / LMG 1025 / NCDC KC755 / 5377).